We begin with the raw amino-acid sequence, 661 residues long: MEGAAAPVAGDRPDLGLGAPGSPREAVAGATAALEPRKPHGVKRHHHKHNLKHRYELQETLGKGTYGKVKRATERFSGRVVAIKSIRKDKIKDEQDMVHIRREIEIMSSLNHPHIISIYEVFENKDKIVIIMEYASKGELYDYISERRRLSERETRHFFRQIVSAVHYCHKNGVVHRDLKLENILLDDNCNIKIADFGLSNLYQKDKFLQTFCGSPLYASPEIVNGRPYRGPEVDSWALGVLLYTLVYGTMPFDGFDHKNLIRQISSGEYREPTQPSDARGLIRWMLMVNPDRRATIEDIANHWWVNWGYKSSVCDCDALHDSESPLLARIIDWHHRSTGLQADTEAKMKGLAKPTTSEVMLERQRSLKKSKKENDFAQSGQDAVPESPSKLSSKRPKGILKKRSNSEHRSHSTGFIEGVVGPALPSTFKMEQDLCRTGVLLPSSPEAEVPGKLSPKQSATMPKKGILKKTQQRESGYYSSPERSESSELLDSNDVMGSSIPSPSPPDPARVTSHSLSCRRKGILKHSSKYSAGTMDPALVSPEMPTLESLSEPGVPAEGLSRSYSRPSSVISDDSVLSSDSFDLLDLQENRPARQRIRSCVSAENFLQIQDFEGLQNRPRPQYLKRYRNRLADSSFSLLTDMDDVTQVYKQALEICSKLN.

M1 carries the N-acetylmethionine modification. The disordered stretch occupies residues M1–R24. S22 carries the phosphoserine modification. The Protein kinase domain occupies Y55–V306. ATP is bound by residues L61–V69 and K84. The active-site Proton acceptor is D178. The residue at position 211 (T211) is a Phosphothreonine; by LKB1. Disordered regions lie at residues T345–V421 and L442–S570. Basic residues predominate over residues S393–R404. A GILK motif motif is present at residues G399 to K402. Phosphoserine is present on S455. The span at S518–S529 shows a compositional bias: basic residues. At S600 the chain carries Phosphoserine; by PKB/AKT1.

This sequence belongs to the protein kinase superfamily. CAMK Ser/Thr protein kinase family. SNF1 subfamily. Interacts (via GILK motif) with PPP1CB; the interaction is direct and bridges NUAK1 and PPP1R12A. Interacts with CDKN1A. Mg(2+) serves as cofactor. In terms of processing, ubiquitinated with 'Lys-29'- and 'Lys-33'-linked polyubiquitins which appear to impede LKB1-mediated phosphorylation. Deubiquitinated by USP9X. Post-translationally, phosphorylated at Thr-211 by STK11/LKB1 in complex with STE20-related adapter-alpha (STRADA) pseudo kinase and CAB39. Not dephosphorylated by the myosin PP1 complex when regulating its activity, due to the presence of PPP1R12A, which prevents myosin PP1 from dephosphorylating NUAK1. Phosphorylated by STK38L upon stimulation with IGF1. In terms of tissue distribution, expressed at high levels in heart and brain, and at lower levels in skeletal muscle, kidney, ovary, placenta, lung and liver. Highly up-regulated in colorectal cancer cell lines.

It localises to the nucleus. It is found in the cytoplasm. It catalyses the reaction L-seryl-[protein] + ATP = O-phospho-L-seryl-[protein] + ADP + H(+). It carries out the reaction L-threonyl-[protein] + ATP = O-phospho-L-threonyl-[protein] + ADP + H(+). Activated by phosphorylation on Thr-211. Activated by phosphorylation at Ser-600 AKT1 during glucose starvation; the relevance of such activation in normal cells is however unsure. Functionally, serine/threonine-protein kinase involved in various processes such as cell adhesion, regulation of cell ploidy and senescence, cell proliferation and tumor progression. Phosphorylates ATM, CASP6, LATS1, PPP1R12A and p53/TP53. Acts as a regulator of cellular senescence and cellular ploidy by mediating phosphorylation of 'Ser-464' of LATS1, thereby controlling its stability. Controls cell adhesion by regulating activity of the myosin protein phosphatase 1 (PP1) complex. Acts by mediating phosphorylation of PPP1R12A subunit of myosin PP1: phosphorylated PPP1R12A then interacts with 14-3-3, leading to reduced dephosphorylation of myosin MLC2 by myosin PP1. May be involved in DNA damage response: phosphorylates p53/TP53 at 'Ser-15' and 'Ser-392' and is recruited to the CDKN1A/WAF1 promoter to participate in transcription activation by p53/TP53. May also act as a tumor malignancy-associated factor by promoting tumor invasion and metastasis under regulation and phosphorylation by AKT1. Suppresses Fas-induced apoptosis by mediating phosphorylation of CASP6, thereby suppressing the activation of the caspase and the subsequent cleavage of CFLAR. Regulates UV radiation-induced DNA damage response mediated by CDKN1A. In association with STK11, phosphorylates CDKN1A in response to UV radiation and contributes to its degradation which is necessary for optimal DNA repair. The polypeptide is NUAK family SNF1-like kinase 1 (NUAK1) (Homo sapiens (Human)).